Here is a 125-residue protein sequence, read N- to C-terminus: Aspartate 1-decarboxylase (125 aa).

The active-site Schiff-base intermediate with substrate; via pyruvic acid is Ser-25. The residue at position 25 (Ser-25) is a Pyruvic acid (Ser). Substrate is bound at residue Thr-57. The Proton donor role is filled by Tyr-58. Gly-73–Ala-75 serves as a coordination point for substrate.

Belongs to the PanD family. As to quaternary structure, heterooctamer of four alpha and four beta subunits. The cofactor is pyruvate. Post-translationally, is synthesized initially as an inactive proenzyme, which is activated by self-cleavage at a specific serine bond to produce a beta-subunit with a hydroxyl group at its C-terminus and an alpha-subunit with a pyruvoyl group at its N-terminus.

The protein resides in the cytoplasm. It catalyses the reaction L-aspartate + H(+) = beta-alanine + CO2. The protein operates within cofactor biosynthesis; (R)-pantothenate biosynthesis; beta-alanine from L-aspartate: step 1/1. Catalyzes the pyruvoyl-dependent decarboxylation of aspartate to produce beta-alanine. This chain is Aspartate 1-decarboxylase, found in Herpetosiphon aurantiacus (strain ATCC 23779 / DSM 785 / 114-95).